Reading from the N-terminus, the 125-residue chain is MRRVLITGSRVWKDRTTVWDALADELHRSPYGLVVVHGGARGADDIADRWAWGMRQEGFNVTPELHRADWEWHGKKAGVLRNIEMVRAGADVCLAFPLGRSVGTRHCMREAQKAGIPVINFGDKP.

This is Gene 61 protein (61) from Mycobacterium phage D29 (Mycobacteriophage D29).